A 480-amino-acid polypeptide reads, in one-letter code: 6-phosphogluconate dehydrogenase, decarboxylating 1 (480 aa).

Residues 10–15 (GLAVMG), 33–35 (NRT), 77–79 (VKA), and Asn-105 each bind NADP(+). Substrate is bound by residues Asn-105 and 131–133 (SGG). Catalysis depends on Lys-186, which acts as the Proton acceptor. Residue 189–190 (HN) coordinates substrate. The Proton donor role is filled by Glu-193. Substrate-binding residues include Tyr-194, Lys-264, Arg-291, Arg-450, and His-456.

The protein belongs to the 6-phosphogluconate dehydrogenase family. As to quaternary structure, homodimer. Highly expressed in inflorescence, lowly expressed in root and embryos and almost absent in leaves.

The protein resides in the cytoplasm. The catalysed reaction is 6-phospho-D-gluconate + NADP(+) = D-ribulose 5-phosphate + CO2 + NADPH. The protein operates within carbohydrate degradation; pentose phosphate pathway; D-ribulose 5-phosphate from D-glucose 6-phosphate (oxidative stage): step 3/3. Catalyzes the oxidative decarboxylation of 6-phosphogluconate to ribulose 5-phosphate and CO(2), with concomitant reduction of NADP to NADPH. This chain is 6-phosphogluconate dehydrogenase, decarboxylating 1 (G6PGH1), found in Oryza sativa subsp. japonica (Rice).